A 326-amino-acid polypeptide reads, in one-letter code: N-acetyl-gamma-glutamyl-phosphate reductase (326 aa).

Residue C155 is part of the active site.

This sequence belongs to the NAGSA dehydrogenase family. Type 1 subfamily.

It is found in the cytoplasm. It catalyses the reaction N-acetyl-L-glutamate 5-semialdehyde + phosphate + NADP(+) = N-acetyl-L-glutamyl 5-phosphate + NADPH + H(+). It participates in amino-acid biosynthesis; L-arginine biosynthesis; N(2)-acetyl-L-ornithine from L-glutamate: step 3/4. Functionally, catalyzes the NADPH-dependent reduction of N-acetyl-5-glutamyl phosphate to yield N-acetyl-L-glutamate 5-semialdehyde. This is N-acetyl-gamma-glutamyl-phosphate reductase from Shewanella sediminis (strain HAW-EB3).